The following is a 389-amino-acid chain: Chalcone synthase 2 (389 aa).

C164 is an active-site residue.

It belongs to the thiolase-like superfamily. Chalcone/stilbene synthases family.

It carries out the reaction (E)-4-coumaroyl-CoA + 3 malonyl-CoA + 3 H(+) = 2',4,4',6'-tetrahydroxychalcone + 3 CO2 + 4 CoA. It participates in secondary metabolite biosynthesis; flavonoid biosynthesis. In terms of biological role, the primary product of this enzyme is 4,2',4',6'-tetrahydroxychalcone (also termed naringenin-chalcone or chalcone) which can under specific conditions spontaneously isomerize into naringenin. This chain is Chalcone synthase 2 (CHS2), found in Solanum lycopersicum (Tomato).